We begin with the raw amino-acid sequence, 477 residues long: Glutamyl-tRNA(Gln) amidotransferase subunit A (477 aa).

Active-site charge relay system residues include Lys71 and Ser146. Ser170 acts as the Acyl-ester intermediate in catalysis.

Belongs to the amidase family. GatA subfamily. Heterotrimer of A, B and C subunits.

It catalyses the reaction L-glutamyl-tRNA(Gln) + L-glutamine + ATP + H2O = L-glutaminyl-tRNA(Gln) + L-glutamate + ADP + phosphate + H(+). Its function is as follows. Allows the formation of correctly charged Gln-tRNA(Gln) through the transamidation of misacylated Glu-tRNA(Gln) in organisms which lack glutaminyl-tRNA synthetase. The reaction takes place in the presence of glutamine and ATP through an activated gamma-phospho-Glu-tRNA(Gln). In Halothermothrix orenii (strain H 168 / OCM 544 / DSM 9562), this protein is Glutamyl-tRNA(Gln) amidotransferase subunit A.